The primary structure comprises 146 residues: Deoxyuridine 5'-triphosphate nucleotidohydrolase (146 aa).

Substrate contacts are provided by residues 65 to 67, N78, 82 to 84, and M92; these read RSG and LID.

The protein belongs to the dUTPase family. The cofactor is Mg(2+).

The catalysed reaction is dUTP + H2O = dUMP + diphosphate + H(+). It participates in pyrimidine metabolism; dUMP biosynthesis; dUMP from dCTP (dUTP route): step 2/2. Its function is as follows. This enzyme is involved in nucleotide metabolism: it produces dUMP, the immediate precursor of thymidine nucleotides and it decreases the intracellular concentration of dUTP so that uracil cannot be incorporated into DNA. In Thiobacillus denitrificans (strain ATCC 25259 / T1), this protein is Deoxyuridine 5'-triphosphate nucleotidohydrolase.